Reading from the N-terminus, the 544-residue chain is CTP synthase (544 aa).

The interval 1–267 (MSKFVFVTGG…GDLLVSRLHL (267 aa)) is amidoligase domain. CTP is bound at residue S13. Position 13 (S13) interacts with UTP. Position 14-19 (14-19 (SVGKGI)) interacts with ATP. Position 54 (Y54) interacts with L-glutamine. D71 contacts ATP. Mg(2+) contacts are provided by D71 and E141. Residues 148–150 (DIE), 188–193 (KTKPTQ), and K224 contribute to the CTP site. UTP is bound by residues 188-193 (KTKPTQ) and K224. A Glutamine amidotransferase type-1 domain is found at 299–534 (YVELKDAYYS…INAAKKVIRD (236 aa)). G354 is an L-glutamine binding site. C381 (nucleophile; for glutamine hydrolysis) is an active-site residue. Residues 382–385 (LGMQ), E405, and R462 each bind L-glutamine. Residues H507 and E509 contribute to the active site.

This sequence belongs to the CTP synthase family. Homotetramer.

It carries out the reaction UTP + L-glutamine + ATP + H2O = CTP + L-glutamate + ADP + phosphate + 2 H(+). It catalyses the reaction L-glutamine + H2O = L-glutamate + NH4(+). The catalysed reaction is UTP + NH4(+) + ATP = CTP + ADP + phosphate + 2 H(+). It functions in the pathway pyrimidine metabolism; CTP biosynthesis via de novo pathway; CTP from UDP: step 2/2. Allosterically activated by GTP, when glutamine is the substrate; GTP has no effect on the reaction when ammonia is the substrate. The allosteric effector GTP functions by stabilizing the protein conformation that binds the tetrahedral intermediate(s) formed during glutamine hydrolysis. Inhibited by the product CTP, via allosteric rather than competitive inhibition. Catalyzes the ATP-dependent amination of UTP to CTP with either L-glutamine or ammonia as the source of nitrogen. Regulates intracellular CTP levels through interactions with the four ribonucleotide triphosphates. The chain is CTP synthase from Dehalococcoides mccartyi (strain ATCC BAA-2266 / KCTC 15142 / 195) (Dehalococcoides ethenogenes (strain 195)).